Reading from the N-terminus, the 180-residue chain is NAD(P)H-quinone oxidoreductase subunit I, chloroplastic (180 aa).

2 4Fe-4S ferredoxin-type domains span residues 55–84 (GRIH…VDWR) and 95–124 (LNYS…MTEE). Residues cysteine 64, cysteine 67, cysteine 70, cysteine 74, cysteine 104, cysteine 107, cysteine 110, and cysteine 114 each contribute to the [4Fe-4S] cluster site.

It belongs to the complex I 23 kDa subunit family. In terms of assembly, NDH is composed of at least 16 different subunits, 5 of which are encoded in the nucleus. [4Fe-4S] cluster serves as cofactor.

The protein resides in the plastid. Its subcellular location is the chloroplast thylakoid membrane. The enzyme catalyses a plastoquinone + NADH + (n+1) H(+)(in) = a plastoquinol + NAD(+) + n H(+)(out). The catalysed reaction is a plastoquinone + NADPH + (n+1) H(+)(in) = a plastoquinol + NADP(+) + n H(+)(out). NDH shuttles electrons from NAD(P)H:plastoquinone, via FMN and iron-sulfur (Fe-S) centers, to quinones in the photosynthetic chain and possibly in a chloroplast respiratory chain. The immediate electron acceptor for the enzyme in this species is believed to be plastoquinone. Couples the redox reaction to proton translocation, and thus conserves the redox energy in a proton gradient. In Illicium oligandrum (Star anise), this protein is NAD(P)H-quinone oxidoreductase subunit I, chloroplastic.